The primary structure comprises 88 residues: MTEELVNHLFEAIVVENVKRANANMAEPYNHSVYKFHEDRIDRLVTTLADGNEALRDQFYEALFDITWDGVAWAKKVFAEISRDIAEG.

In Mycobacterium phage L5 (Mycobacteriophage L5), this protein is Gene 85 protein (85).